The chain runs to 117 residues: Non-specific lipid-transfer protein 1 (117 aa).

An N-terminal signal peptide occupies residues Met1–Ala26. 4 disulfides stabilise this stretch: Cys29-Cys76, Cys39-Cys53, Cys54-Cys99, and Cys74-Cys113.

It belongs to the plant LTP family.

In terms of biological role, plant non-specific lipid-transfer proteins transfer phospholipids as well as galactolipids across membranes. May play a role in wax or cutin deposition in the cell walls of expanding epidermal cells and certain secretory tissues. The sequence is that of Non-specific lipid-transfer protein 1 from Prunus dulcis (Almond).